The following is a 237-amino-acid chain: Ribosomal RNA large subunit methyltransferase E (237 aa).

The S-adenosyl-L-methionine site is built by Gly80, Trp82, Asp108, Asp124, and Asp148. The Proton acceptor role is filled by Lys188.

The protein belongs to the class I-like SAM-binding methyltransferase superfamily. RNA methyltransferase RlmE family.

The protein resides in the cytoplasm. The catalysed reaction is uridine(2552) in 23S rRNA + S-adenosyl-L-methionine = 2'-O-methyluridine(2552) in 23S rRNA + S-adenosyl-L-homocysteine + H(+). Specifically methylates the uridine in position 2552 of 23S rRNA at the 2'-O position of the ribose in the fully assembled 50S ribosomal subunit. In Jannaschia sp. (strain CCS1), this protein is Ribosomal RNA large subunit methyltransferase E.